Reading from the N-terminus, the 160-residue chain is Troponin C, skeletal muscle (160 aa).

4 EF-hand domains span residues 15-50, 51-86, 91-126, and 127-160; these read EMIA…LGQN, PTRE…QLKE, KSEE…SGEP, and VSEE…ENIQ. Residues D28, D30, D34, E39, D64, D66, S68, T70, E75, D104, N106, D108, E115, D140, N142, D144, K146, and E151 each coordinate Ca(2+).

The protein belongs to the troponin C family.

Functionally, troponin is the central regulatory protein of striated muscle contraction. Tn consists of three components: Tn-I which is the inhibitor of actomyosin ATPase, Tn-T which contains the binding EF-hand for tropomyosin and Tn-C. The binding of calcium to Tn-C abolishes the inhibitory action of Tn on actin filaments. The polypeptide is Troponin C, skeletal muscle (Anguilla anguilla (European freshwater eel)).